We begin with the raw amino-acid sequence, 310 residues long: ADP-L-glycero-D-manno-heptose-6-epimerase (310 aa).

Residues 10 to 11 (FI), 31 to 32 (DN), lysine 38, lysine 53, 75 to 79 (EGACS), and asparagine 92 each bind NADP(+). The active-site Proton acceptor is the tyrosine 140. Lysine 144 serves as a coordination point for NADP(+). Substrate is bound at residue asparagine 169. 2 residues coordinate NADP(+): valine 170 and lysine 178. Residue lysine 178 is the Proton acceptor of the active site. Substrate contacts are provided by residues serine 180, histidine 187, 201–204 (FSGS), arginine 209, and tyrosine 272.

Belongs to the NAD(P)-dependent epimerase/dehydratase family. HldD subfamily. Homopentamer. NADP(+) is required as a cofactor.

It carries out the reaction ADP-D-glycero-beta-D-manno-heptose = ADP-L-glycero-beta-D-manno-heptose. It participates in nucleotide-sugar biosynthesis; ADP-L-glycero-beta-D-manno-heptose biosynthesis; ADP-L-glycero-beta-D-manno-heptose from D-glycero-beta-D-manno-heptose 7-phosphate: step 4/4. Functionally, catalyzes the interconversion between ADP-D-glycero-beta-D-manno-heptose and ADP-L-glycero-beta-D-manno-heptose via an epimerization at carbon 6 of the heptose. The chain is ADP-L-glycero-D-manno-heptose-6-epimerase from Pectobacterium carotovorum subsp. carotovorum (strain PC1).